The primary structure comprises 846 residues: Leucine--tRNA ligase (846 aa).

Residues 42 to 52 (PYPSGNLHMGH) carry the 'HIGH' region motif. The 'KMSKS' region signature appears at 586 to 590 (KMSKS). Lys589 provides a ligand contact to ATP.

The protein belongs to the class-I aminoacyl-tRNA synthetase family.

The protein localises to the cytoplasm. It catalyses the reaction tRNA(Leu) + L-leucine + ATP = L-leucyl-tRNA(Leu) + AMP + diphosphate. This chain is Leucine--tRNA ligase, found in Heliobacterium modesticaldum (strain ATCC 51547 / Ice1).